A 224-amino-acid polypeptide reads, in one-letter code: TM2 domain-containing protein amaretto (224 aa).

Residues 1 to 18 (MRIFYGLLAFLVARQHDA) form the signal peptide. The Extracellular portion of the chain corresponds to 19–154 (QAIQARSDKE…FLRAGVPCVR (136 aa)). N-linked (GlcNAc...) asparagine glycans are attached at residues Asn102 and Asn142. A helical membrane pass occupies residues 155–175 (YTDHYFVTTLIYSMLLGFLGM). Positions 157-205 (DHYFVTTLIYSMLLGFLGMDRFCLGQTGTAVGKLLTMGGVGVWWIIDVI) constitute a TM2 domain. Residues 176-189 (DRFCLGQTGTAVGK) lie on the Cytoplasmic side of the membrane. A helical transmembrane segment spans residues 190–210 (LLTMGGVGVWWIIDVILLITN). Over 211–224 (NLLPEDGSNWNPYV) the chain is Extracellular.

The protein belongs to the TM2 family.

It is found in the membrane. Positive regulator of Notch signaling. Maternal neurogenic factor involved in Notch signaling-dependent neuroectodermal specification during early embryogenesis. Functions cooperatively with amx/TM2D3 and bisc/TM2D1. The protein is TM2 domain-containing protein amaretto of Drosophila melanogaster (Fruit fly).